Here is a 498-residue protein sequence, read N- to C-terminus: PHD finger protein 10 (498 aa).

Residues 1 to 10 (MAAAAGPGAA) show a composition bias toward low complexity. Residues 1–62 (MAAAAGPGAA…SSRSCETSSQ (62 aa)) form a disordered region. Position 2 is an N-acetylalanine (A2). Phosphoserine occurs at positions 12, 36, and 50. Positions 89 to 185 (MLQEQVSEYL…HYKEYSQMQQ (97 aa)) are essential to induce neural progenitor proliferation. Residues 89–295 (MLQEQVSEYL…PPLDPELPAL (207 aa)) are SAY. Residue K241 forms a Glycyl lysine isopeptide (Lys-Gly) (interchain with G-Cter in SUMO2) linkage. Phosphoserine is present on S270. The span at 285–296 (EPPLDPELPALD) shows a compositional bias: low complexity. Positions 285-368 (EPPLDPELPA…KRSVLSKSVP (84 aa)) are disordered. The essential to induce neural progenitor proliferation stretch occupies residues 292–334 (LPALDSDGDSDDGEDGRGDEKRKNKGTSDSSSGNVSEGESPPD). A phosphoserine mark is found at S297, S301, S327, and S331. The span at 318-328 (TSDSSSGNVSE) shows a compositional bias: polar residues. Positions 345-359 (KSKDKAATPRKDGPK) are enriched in basic and acidic residues. A PHD-type 1; degenerate zinc finger spans residues 379-436 (ICGICLKGKESNKKGKAESLIHCSQCENSGHPSCLDMTMELVSMIKTYPWQCMECKTC). K385 participates in a covalent cross-link: Glycyl lysine isopeptide (Lys-Gly) (interchain with G-Cter in SUMO2). A PHD-type 2; degenerate zinc finger spans residues 438–481 (ICGQPHHEEEMMFCDMCDRGYHTFCVGLGAIPSGRWICDCCQRA).

This sequence belongs to the SAYP family. As to quaternary structure, component of neural progenitors-specific chromatin remodeling complex (npBAF complex) composed of at least, ARID1A/BAF250A or ARID1B/BAF250B, SMARCD1/BAF60A, SMARCD3/BAF60C, SMARCA2/BRM/BAF190B, SMARCA4/BRG1/BAF190A, SMARCB1/BAF47, SMARCC1/BAF155, SMARCE1/BAF57, SMARCC2/BAF170, PHF10/BAF45A, ACTL6A/BAF53A and actin. Interacts with ACTL6A/BAF53A, SMARCA2/BRM/BAF190B, SMARCA4/BRG1/BAF190A and PBRM1/BAF180.

The protein resides in the nucleus. Functionally, involved in transcription activity regulation by chromatin remodeling. Belongs to the neural progenitors-specific chromatin remodeling complex (npBAF complex) and is required for the proliferation of neural progenitors. During neural development a switch from a stem/progenitor to a post-mitotic chromatin remodeling mechanism occurs as neurons exit the cell cycle and become committed to their adult state. The transition from proliferating neural stem/progenitor cells to post-mitotic neurons requires a switch in subunit composition of the npBAF and nBAF complexes. As neural progenitors exit mitosis and differentiate into neurons, npBAF complexes which contain ACTL6A/BAF53A and PHF10/BAF45A, are exchanged for homologous alternative ACTL6B/BAF53B and DPF1/BAF45B or DPF3/BAF45C subunits in neuron-specific complexes (nBAF). The npBAF complex is essential for the self-renewal/proliferative capacity of the multipotent neural stem cells. The nBAF complex along with CREST plays a role regulating the activity of genes essential for dendrite growth. This chain is PHD finger protein 10 (PHF10), found in Homo sapiens (Human).